The primary structure comprises 350 residues: Biotin synthase (350 aa).

Residues 38–257 enclose the Radical SAM core domain; that stretch reads NKVQVSTLLS…AVARIIMPMS (220 aa). Cys53, Cys57, and Cys60 together coordinate [4Fe-4S] cluster. [2Fe-2S] cluster contacts are provided by Cys97, Cys128, Cys188, and Arg260.

It belongs to the radical SAM superfamily. Biotin synthase family. In terms of assembly, homodimer. [4Fe-4S] cluster serves as cofactor. [2Fe-2S] cluster is required as a cofactor.

It carries out the reaction (4R,5S)-dethiobiotin + (sulfur carrier)-SH + 2 reduced [2Fe-2S]-[ferredoxin] + 2 S-adenosyl-L-methionine = (sulfur carrier)-H + biotin + 2 5'-deoxyadenosine + 2 L-methionine + 2 oxidized [2Fe-2S]-[ferredoxin]. It participates in cofactor biosynthesis; biotin biosynthesis; biotin from 7,8-diaminononanoate: step 2/2. Its function is as follows. Catalyzes the conversion of dethiobiotin (DTB) to biotin by the insertion of a sulfur atom into dethiobiotin via a radical-based mechanism. This is Biotin synthase from Photobacterium profundum (strain SS9).